Consider the following 424-residue polypeptide: Glutamyl-tRNA reductase (424 aa).

Residues 49–52 (TCNR), S105, 110–112 (EPQ), and Q116 contribute to the substrate site. C50 functions as the Nucleophile in the catalytic mechanism. 185–190 (GSGETA) contributes to the NADP(+) binding site.

Belongs to the glutamyl-tRNA reductase family. Homodimer.

The enzyme catalyses (S)-4-amino-5-oxopentanoate + tRNA(Glu) + NADP(+) = L-glutamyl-tRNA(Glu) + NADPH + H(+). It functions in the pathway porphyrin-containing compound metabolism; protoporphyrin-IX biosynthesis; 5-aminolevulinate from L-glutamyl-tRNA(Glu): step 1/2. Its function is as follows. Catalyzes the NADPH-dependent reduction of glutamyl-tRNA(Glu) to glutamate 1-semialdehyde (GSA). This Legionella pneumophila (strain Corby) protein is Glutamyl-tRNA reductase.